Here is a 474-residue protein sequence, read N- to C-terminus: Trehalose-6-phosphate synthase (474 aa).

Arginine 10 is a D-glucose 6-phosphate binding site. Glycine 22–glycine 23 is a binding site for UDP-alpha-D-glucose. The D-glucose 6-phosphate site is built by tyrosine 77 and aspartate 131. Residues arginine 263 and lysine 268 each coordinate UDP-alpha-D-glucose. Arginine 301 contacts D-glucose 6-phosphate. Residues phenylalanine 340 and leucine 366–glutamate 370 each bind UDP-alpha-D-glucose.

Belongs to the glycosyltransferase 20 family. Homotetramer.

It catalyses the reaction D-glucose 6-phosphate + UDP-alpha-D-glucose = alpha,alpha-trehalose 6-phosphate + UDP + H(+). It functions in the pathway glycan biosynthesis; trehalose biosynthesis. In terms of biological role, probably involved in the osmoprotection via the biosynthesis of trehalose. Catalyzes the transfer of glucose from UDP-alpha-D-glucose (UDP-Glc) to D-glucose 6-phosphate (Glc-6-P) to form trehalose-6-phosphate. Acts with retention of the anomeric configuration of the UDP-sugar donor. This Enterobacter sp. (strain 638) protein is Trehalose-6-phosphate synthase.